Reading from the N-terminus, the 357-residue chain is Red-sensitive opsin (357 aa).

At 1–49 (MAEQWGKQVFAARRQNEDTTRGSAFTYTNSNHTRDPFEGPNYHIAPRWV) the chain is on the extracellular side. N-linked (GlcNAc...) asparagine glycosylation occurs at Asn31. Residues 50-74 (YNLATLWMFFVVVLSVFTNGLVLVA) traverse the membrane as a helical segment. Over 75–86 (TAKFKKLRHPLN) the chain is Cytoplasmic. Residues 87–112 (WILSNLAIADLGETVFASTISVCNQF) traverse the membrane as a helical segment. Residues 113-126 (FGYFILGHPMCVFE) are Extracellular-facing. Residues Cys123 and Cys200 are joined by a disulfide bond. A helical membrane pass occupies residues 127 to 146 (GYVVSTCGIAALWSLTIISW). Over 147–165 (ERWVVVCKPFGNVKFDAKW) the chain is Cytoplasmic. A helical transmembrane segment spans residues 166 to 189 (AIGGIVFSWVWSAVWCAPPVFGWS). Topologically, residues 190 to 215 (RYWPHGLKTSCGPDVFSGSDDPGVQS) are extracellular. Residues 216-243 (YMIVLMITCCIIPLAIIILCYLAVWLAI) traverse the membrane as a helical segment. Residues 244-265 (RAVAMQQKESESTQKAEREVSR) are Cytoplasmic-facing. The chain crosses the membrane as a helical span at residues 266–289 (MVVVMIVAYCVCWGPYTFFACFAA). Over 290-297 (ANPGYAFH) the chain is Extracellular. A helical transmembrane segment spans residues 298-322 (PLAAAMPAYFAKSATIYNPVIYVFM). Position 309 is an N6-(retinylidene)lysine (Lys309). Over 323-357 (NRQFRTCIMQLFGKQVDDGSEVSTSKTEVSSVAPA) the chain is Cytoplasmic.

It belongs to the G-protein coupled receptor 1 family. Opsin subfamily. Post-translationally, phosphorylated on some or all of the serine and threonine residues present in the C-terminal region. As to expression, the color pigments are found in the cone photoreceptor cells.

Its subcellular location is the membrane. Functionally, visual pigments are the light-absorbing molecules that mediate vision. They consist of an apoprotein, opsin, covalently linked to cis-retinal. This Oryzias latipes (Japanese rice fish) protein is Red-sensitive opsin.